A 423-amino-acid polypeptide reads, in one-letter code: MTVDLLLGLQWGDEGKGKIVDVLTSKYDIIARFQGGPNAGHTLEFDGIKHVLRTIPSGIFHKNNINIIGNGVVIDPVVFKTEVDGLAKFNLDLKSKLIISRKAHLILPTHRLLDAASEASKGKAKIGSTLKGIGPTYMDKTGRNGIRVGDIELVDFKEKYRALANKHEEMIKFYDVSIQYNLAELEKEFFEAIEDLKKLDFIDSEEYLHQAQKAGKSILCEGAQGSLLDVDFGTYPFVTSSNTTAAGACTGLGIAPNKIKEVYGIFKAYTTRVGSGPFPTEDFEDAGTTMAKVGNEFGSVTGRQRRCGWLDLVALKYAVQINGVTQLMMMKGDVLSGFETLKVCTSYKYKGQEIAHLPYNIEPENIEPVYTEFKGWKADLTGMSSYDELPKELKDYIDFIEKEVEVPIKIVSVGPDRKQTITK.

Residues Gly12–Lys18 and Gly40–Thr42 contribute to the GTP site. Asp13 serves as the catalytic Proton acceptor. Mg(2+) contacts are provided by Asp13 and Gly40. IMP is bound by residues Asp13 to Lys16, Asn38 to His41, Thr129, Arg143, Gln224, Thr239, and Arg303. His41 functions as the Proton donor in the catalytic mechanism. Residue Ser299–Arg305 coordinates substrate. GTP-binding positions include Arg305, Lys331–Asp333, and Ser412–Gly414.

This sequence belongs to the adenylosuccinate synthetase family. Homodimer. It depends on Mg(2+) as a cofactor.

It localises to the cytoplasm. The catalysed reaction is IMP + L-aspartate + GTP = N(6)-(1,2-dicarboxyethyl)-AMP + GDP + phosphate + 2 H(+). Its pathway is purine metabolism; AMP biosynthesis via de novo pathway; AMP from IMP: step 1/2. Functionally, plays an important role in the de novo pathway of purine nucleotide biosynthesis. Catalyzes the first committed step in the biosynthesis of AMP from IMP. The chain is Adenylosuccinate synthetase from Flavobacterium psychrophilum (strain ATCC 49511 / DSM 21280 / CIP 103535 / JIP02/86).